A 189-amino-acid polypeptide reads, in one-letter code: GTPase HRas (189 aa).

A GTP-binding site is contributed by 10–17 (GAKGVGKS). An Effector region motif is present at residues 32-40 (YDPTIEDSY). GTP-binding positions include 57-61 (DTAGQ) and 116-119 (NKCD). S-palmitoyl cysteine; by host attachment occurs at residues cysteine 181 and cysteine 184. Cysteine 186 is subject to Cysteine methyl ester; by host. A lipid anchor (S-farnesyl cysteine; by host) is attached at cysteine 186. A propeptide spans 187–189 (VLS) (removed in mature form).

It belongs to the small GTPase superfamily. Ras family.

It localises to the host cell membrane. The catalysed reaction is GTP + H2O = GDP + phosphate + H(+). Its activity is regulated as follows. Alternates between an inactive form bound to GDP and an active form bound to GTP. Activated by a guanine nucleotide-exchange factor (GEF) and inactivated by a GTPase-activating protein (GAP). This Moloney murine sarcoma virus (MoMSV) protein is GTPase HRas (H-RAS).